Here is a 457-residue protein sequence, read N- to C-terminus: NADH-ubiquinone oxidoreductase chain 4 (457 aa).

The next 12 membrane-spanning stretches (helical) occupy residues 22–42 (NLWP…IALI), 59–79 (SMQL…LIAS), 95–115 (IVLV…LELI), 116–136 (LFYI…TRWG), 148–168 (FIFY…ALYF), 191–211 (LTVW…IYGF), 223–243 (PVAG…YGLM), 257–277 (SSLP…IICI), 282–302 (LKAL…AGVF), 309–329 (INGA…LFAL), 350–370 (LILP…LGFP), and 433–453 (LFLL…LVLI).

The protein belongs to the complex I subunit 4 family.

The protein localises to the mitochondrion membrane. It carries out the reaction a ubiquinone + NADH + 5 H(+)(in) = a ubiquinol + NAD(+) + 4 H(+)(out). Core subunit of the mitochondrial membrane respiratory chain NADH dehydrogenase (Complex I) that is believed to belong to the minimal assembly required for catalysis. Complex I functions in the transfer of electrons from NADH to the respiratory chain. The immediate electron acceptor for the enzyme is believed to be ubiquinone. This is NADH-ubiquinone oxidoreductase chain 4 (ND4) from Arbacia lixula (Black urchin).